Reading from the N-terminus, the 293-residue chain is 4-hydroxybenzoate octaprenyltransferase (293 aa).

7 helical membrane passes run 25–45 (IGNF…AKGL), 48–68 (LKVL…GCVI), 101–121 (LFVV…PLTI), 142–162 (HFPQ…AFAA), 165–185 (GAVA…ATIY), 223–243 (VMLA…FWYL), and 271–291 (FLNN…DLHL).

This sequence belongs to the UbiA prenyltransferase family. Mg(2+) is required as a cofactor.

It localises to the cell inner membrane. The enzyme catalyses all-trans-octaprenyl diphosphate + 4-hydroxybenzoate = 4-hydroxy-3-(all-trans-octaprenyl)benzoate + diphosphate. It participates in cofactor biosynthesis; ubiquinone biosynthesis. Its function is as follows. Catalyzes the prenylation of para-hydroxybenzoate (PHB) with an all-trans polyprenyl group. Mediates the second step in the final reaction sequence of ubiquinone-8 (UQ-8) biosynthesis, which is the condensation of the polyisoprenoid side chain with PHB, generating the first membrane-bound Q intermediate 3-octaprenyl-4-hydroxybenzoate. The chain is 4-hydroxybenzoate octaprenyltransferase from Alkalilimnicola ehrlichii (strain ATCC BAA-1101 / DSM 17681 / MLHE-1).